A 597-amino-acid polypeptide reads, in one-letter code: Glypican-3 (597 aa).

The first 24 residues, Met1 to Ala24, serve as a signal peptide directing secretion. Residue Gln25 is modified to Pyrrolidone carboxylic acid. 7 disulfides stabilise this stretch: Cys34–Cys71, Cys64–Cys261, Cys72–Cys264, Cys196–Cys348, Cys251–Cys284, Cys273–Cys421, and Cys277–Cys409. N-linked (GlcNAc...) asparagine glycans are attached at residues Asn123 and Asn240. The residue at position 351 (Ser351) is a Phosphoserine. Asn417 carries an N-linked (GlcNAc...) asparagine glycan. O-linked (Xyl...) (glycosaminoglycan) serine glycosylation is found at Ser494 and Ser508. The disordered stretch occupies residues Asp533 to Ser553.

Belongs to the glypican family. In terms of assembly, heterodimer; disulfide-linked. Cleavage by a furin-like convertase results in production of alpha and beta chains which form a disulfide-linked heterodimer. Interacts with DPP4. Interacts with FGF2. Interacts with WNT5A. Also interacts with WNT3A and WNT7B. Interacts with hedgehog protein SHH; the heparan sulfate chains are not required for the interaction. Also interacts with hedgehog protein IHH. Interacts with CD81. Interacts with Wnt receptors FZD4, FZD7 and FZD8; the heparan sulfate chains are required for the interaction. O-glycosylated; contains heparan sulfate and/or chondroitin sulfate. In terms of processing, cleaved intracellularly by a furin-like convertase to generate 2 subunits, alpha and beta, which remain associated through disulfide bonds and are associated with the cell surface via the GPI-anchor. This processing is essential for its role in inhibition of hedgehog signaling. A second proteolytic event may result in cleavage of the protein on the cell surface, separating it from the GPI-anchor and leading to its shedding from the cell surface.

The protein localises to the cell membrane. Functionally, cell surface proteoglycan. Negatively regulates the hedgehog signaling pathway when attached via the GPI-anchor to the cell surface by competing with the hedgehog receptor PTC1 for binding to hedgehog proteins. Binding to the hedgehog protein SHH triggers internalization of the complex by endocytosis and its subsequent lysosomal degradation. Positively regulates the canonical Wnt signaling pathway by binding to the Wnt receptor Frizzled and stimulating the binding of the Frizzled receptor to Wnt ligands. Positively regulates the non-canonical Wnt signaling pathway. Binds to CD81 which decreases the availability of free CD81 for binding to the transcriptional repressor HHEX, resulting in nuclear translocation of HHEX and transcriptional repression. Inhibits the dipeptidyl peptidase activity of DPP4. Plays a role in limb patterning and skeletal development by controlling the cellular response to BMP4. Modulates the effects of growth factors BMP2, BMP7 and FGF7 on renal branching morphogenesis. Required for coronary vascular development. Plays a role in regulating cell movements during gastrulation. The chain is Glypican-3 (Gpc3) from Rattus norvegicus (Rat).